Here is a 183-residue protein sequence, read N- to C-terminus: Peptidyl-tRNA hydrolase (183 aa).

Tyrosine 15 contacts tRNA. Histidine 20 (proton acceptor) is an active-site residue. TRNA is bound by residues tyrosine 67 and asparagine 69.

The protein belongs to the PTH family. Monomer.

The protein resides in the cytoplasm. The catalysed reaction is an N-acyl-L-alpha-aminoacyl-tRNA + H2O = an N-acyl-L-amino acid + a tRNA + H(+). Hydrolyzes ribosome-free peptidyl-tRNAs (with 1 or more amino acids incorporated), which drop off the ribosome during protein synthesis, or as a result of ribosome stalling. Its function is as follows. Catalyzes the release of premature peptidyl moieties from peptidyl-tRNA molecules trapped in stalled 50S ribosomal subunits, and thus maintains levels of free tRNAs and 50S ribosomes. This chain is Peptidyl-tRNA hydrolase, found in Chlamydia caviae (strain ATCC VR-813 / DSM 19441 / 03DC25 / GPIC) (Chlamydophila caviae).